A 199-amino-acid chain; its full sequence is Superoxide dismutase [Mn/Fe] (199 aa).

Fe(3+)-binding residues include H27, H81, D161, and H165. Residues H27, H81, D161, and H165 each coordinate Mn(2+).

This sequence belongs to the iron/manganese superoxide dismutase family. Homodimer. Mn(2+) serves as cofactor. The cofactor is Fe(3+).

It carries out the reaction 2 superoxide + 2 H(+) = H2O2 + O2. Its function is as follows. Destroys superoxide anion radicals which are normally produced within the cells and which are toxic to biological systems. Catalyzes the dismutation of superoxide anion radicals into O2 and H2O2 by successive reduction and oxidation of the transition metal ion at the active site. In Staphylococcus epidermidis (strain ATCC 35984 / DSM 28319 / BCRC 17069 / CCUG 31568 / BM 3577 / RP62A), this protein is Superoxide dismutase [Mn/Fe] (sodA).